The chain runs to 193 residues: Interferon type A3 (193 aa).

An N-terminal signal peptide occupies residues 1–31 (MAVPASPQHPRGYGILLLTLLLKALATTASA). Disulfide bonds link cysteine 32–cysteine 129, cysteine 61–cysteine 155, and cysteine 68–cysteine 168. 4 N-linked (GlcNAc...) asparagine glycosylation sites follow: asparagine 65, asparagine 71, asparagine 108, and asparagine 186.

Belongs to the alpha/beta interferon family.

Its subcellular location is the secreted. Functionally, has antiviral activities. The sequence is that of Interferon type A3 (IFNA3) from Gallus gallus (Chicken).